Consider the following 72-residue polypeptide: Translation initiation factor IF-1 (72 aa).

Positions 1-72 (MAKDDVIEVD…DKGRITFRYK (72 aa)) constitute an S1-like domain.

The protein belongs to the IF-1 family. In terms of assembly, component of the 30S ribosomal translation pre-initiation complex which assembles on the 30S ribosome in the order IF-2 and IF-3, IF-1 and N-formylmethionyl-tRNA(fMet); mRNA recruitment can occur at any time during PIC assembly.

Its subcellular location is the cytoplasm. One of the essential components for the initiation of protein synthesis. Stabilizes the binding of IF-2 and IF-3 on the 30S subunit to which N-formylmethionyl-tRNA(fMet) subsequently binds. Helps modulate mRNA selection, yielding the 30S pre-initiation complex (PIC). Upon addition of the 50S ribosomal subunit IF-1, IF-2 and IF-3 are released leaving the mature 70S translation initiation complex. The polypeptide is Translation initiation factor IF-1 (Nitratiruptor sp. (strain SB155-2)).